The following is a 62-amino-acid chain: Potassium channel toxin alpha-KTx 10.1 (62 aa).

The N-terminal stretch at 1–22 is a signal peptide; it reads MEGIAKITLILLFLFVTMHTFA. A propeptide spanning residues 23-28 is cleaved from the precursor; sequence NWNTEA. Cystine bridges form between cysteine 31-cysteine 50, cysteine 36-cysteine 55, and cysteine 40-cysteine 57. Tyrosine 60 carries the post-translational modification Tyrosine amide.

This sequence belongs to the short scorpion toxin superfamily. Potassium channel inhibitor family. Alpha-KTx 10 subfamily. Expressed by the venom gland.

The protein resides in the secreted. Blocks Shaker B (Sh) and voltage-gated potassium-channels Kv1.1/KCNA1, Kv1.2/KCNA2, Kv1.3/KCNA3. Also inhibits small conductance calcium-activated potassium channels (KCNN) and intermediate conductance calcium-activated potassium channel (KCa3.1/KCNN4). The chain is Potassium channel toxin alpha-KTx 10.1 from Centruroides noxius (Mexican scorpion).